Consider the following 231-residue polypeptide: 2-C-methyl-D-erythritol 2,4-cyclodiphosphate synthase, chloroplastic (231 aa).

A chloroplast-targeting transit peptide spans 1–52; that stretch reads MATSSTQLLLSSSSLFHSQITKKPFLLPATKIGVWRPKKSLSLSCRPSASVS. A divalent metal cation contacts are provided by Asp82 and His84. Substrate is bound by residues 82-84, 108-109, 112-120, 130-132, 135-139, Asp139, 174-180, and 205-209; these read DLH, HS, DVLLHCVVD, DIG, FPDSD, LQRPKIS, and AKTHE. His116 is a binding site for a divalent metal cation.

This sequence belongs to the IspF family. In terms of assembly, homotrimer. A divalent metal cation serves as cofactor.

The protein localises to the plastid. The protein resides in the chloroplast stroma. The enzyme catalyses 4-CDP-2-C-methyl-D-erythritol 2-phosphate = 2-C-methyl-D-erythritol 2,4-cyclic diphosphate + CMP. It functions in the pathway isoprenoid biosynthesis; isopentenyl diphosphate biosynthesis via DXP pathway; isopentenyl diphosphate from 1-deoxy-D-xylulose 5-phosphate: step 4/6. In terms of biological role, enzyme of the plastid non-mevalonate pathway for isoprenoid biosynthesis that converts 4-diphosphocytidyl-2C-methyl-D-erythritol 2-phosphate into 2C-methyl-D-erythritol 2,4-cyclodiphosphate and CMP. Is essential for chloroplast development. The protein is 2-C-methyl-D-erythritol 2,4-cyclodiphosphate synthase, chloroplastic of Arabidopsis thaliana (Mouse-ear cress).